Consider the following 381-residue polypeptide: D-rhamnosyltransferase WbpZ (381 aa).

Substrate is bound by residues Glu-19, His-116, Lys-206, and Val-252.

It belongs to the glycosyltransferase group 1 family. Glycosyltransferase 4 subfamily.

It localises to the cytoplasm. The enzyme catalyses GDP-alpha-D-rhamnose + N-acetyl-alpha-D-glucosaminyl-di-trans,octa-cis-undecaprenyl diphosphate = alpha-D-rhamnosyl-(1-&gt;3)-N-acetyl-alpha-D-glucosaminyl-1-diphospho-di-trans,octa-cis-undecaprenol + GDP + H(+). The catalysed reaction is GDP-alpha-D-rhamnose + N-acetyl-alpha-D-galactosaminyl-di-trans,octa-cis-undecaprenyl diphosphate = alpha-D-rhamnosyl-(1-&gt;3)-N-acetyl-alpha-D-galactosaminyl-1-diphospho-di-trans,octa-cis-undecaprenol + GDP + H(+). It carries out the reaction N-acetyl-alpha-D-glucosaminyl-di-trans,octa-cis-undecaprenyl diphosphate + GDP-alpha-D-mannose = alpha-D-mannosyl-(1-&gt;3)-N-acetyl-alpha-D-glucosaminyl-di-trans,octa-cis-undecaprenyl diphosphate + GDP + H(+). It catalyses the reaction N-acetyl-alpha-D-galactosaminyl-di-trans,octa-cis-undecaprenyl diphosphate + GDP-alpha-D-mannose = alpha-D-mannosyl-(1-&gt;3)-N-acetyl-alpha-D-galctosaminyl-1-diphospho-di-trans,octa-cis-undecaprenol + GDP + H(+). It functions in the pathway lipopolysaccharide biosynthesis; LPS oligosaccharide biosynthesis. Not activated by dithiothreitol (DTT) using GlcNAc-alpha-PO(3)-PO(3)-phenylundecyl (GlcNAc-PP-PhU) as acceptor substrate. 0.25% Triton X-100 and 0.125% NP-40 increases the activity 2.5-fold and 2-fold, respectively. 0.125% octyl glucoside has little effect on activity. Slightly increased activity with Mg(2+) and Pb(2+), while no effect with Mn(2+), Co(2+), Ni(2+), Cu(2+), Zn(2+), Ca(2+) or EDTA. Not inhibited by N-butyryl-galactosamine-alpha-benzyl or N-butyryl-glucosamine-beta-benzyl. Bis-imidazolium salts having aliphatic spacer groups with 4 or 6 carbons have little effect on activity, but spacer groups of 18-22 aliphatic carbons inhibit activity, with the most potent inhibitor being bis-imidazolium salt having a 20-carbon chain spacer length. Its function is as follows. Non-processive alpha-1,3-D-rhamnosyltransferase. Catalyzes the transfer of one D-rhamnose (D-Rha) residue from donor substrate GDP-D-Rha in alpha-1-3 linkage to both GlcNAc- and GalNAc-diphosphate-lipid acceptor substrates. Is also able to transfer D-mannose (D-Man) to these acceptors at a lower level. Nucleotide sugars GDP-D-Rha, GDP-Fuc, UDP-Gal, UDP-GalNAc, UDP-GlcNAc and CMP-sialic acid cannot act as donor substrates. Only compounds with a diphosphate as the aglycone group can act as acceptor substrates. No activity is detected with compounds containing a diphosphate mimic. Fluorescent undecyl-anthracenyl group-containing compounds, such as GlcNAc-PO(3)-PO(3)-AnthrU and GalNAc-PO(3)-PO(3)-AnthrU, are also good acceptor substrates. Involved in the biosynthesis of the common polysaccharide antigen (CPA), also called A band, which is one of the two major cell surface O-antigens of the P.aeruginosa lipopolysaccharide. Involved in susceptibility to antibiotic colistin. The sequence is that of D-rhamnosyltransferase WbpZ from Pseudomonas aeruginosa (strain ATCC 15692 / DSM 22644 / CIP 104116 / JCM 14847 / LMG 12228 / 1C / PRS 101 / PAO1).